The following is a 270-amino-acid chain: Outer membrane protein P.IIC (270 aa).

Residues 1 to 25 form the signal peptide; sequence MQPAKNLLFSSLLFSSLLFSSAARA. Over 26 to 35 the chain is Extracellular; it reads ASEDGGRGPY. Residues 36–44 traverse the membrane as a beta stranded segment; that stretch reads VQADLAYAA. The Periplasmic portion of the chain corresponds to 45 to 76; the sequence is ERITHDYPKPTGTGKNKISTVSDYFRNIRTHS. Residues 77 to 85 traverse the membrane as a beta stranded segment; the sequence is VHPRVSVGY. At 86-89 the chain is on the extracellular side; the sequence is DFGS. Residues 90 to 96 form a beta stranded membrane-spanning segment; that stretch reads WRIAADY. At 97 to 142 the chain is on the periplasmic side; sequence ARYRKWNNNKYSVSIKELLRNDNSASGVRGHLNIQTQKTEHQENGT. Residues 143 to 157 traverse the membrane as a beta stranded segment; it reads FHAVSSLGLSTIYDF. The Extracellular segment spans residues 158–162; the sequence is DTGSR. The chain crosses the membrane as a beta stranded span at residues 163–173; the sequence is FKPYIGMRVAY. Residues 174-221 lie on the Periplasmic side of the membrane; that stretch reads GHVRHQVRSVEQETEIITTYPSNGGGKVSLSSKMPPKSAHHQSNSIRR. Positions 194–217 are disordered; the sequence is PSNGGGKVSLSSKMPPKSAHHQSN. The chain crosses the membrane as a beta stranded span at residues 222–234; the sequence is VGLGVIAGVGFDI. The Extracellular segment spans residues 235–237; that stretch reads TPN. A beta stranded membrane pass occupies residues 238–246; that stretch reads LTLDTGYRY. The Periplasmic segment spans residues 247-261; sequence HNWGRLENTRFKTHE. Residues 262–270 traverse the membrane as a beta stranded segment; the sequence is ASLGMRYRF.

The protein belongs to the opacity porin family. As to quaternary structure, homotrimer.

The protein localises to the cell outer membrane. Its function is as follows. This protein serves as a porin. This Neisseria gonorrhoeae protein is Outer membrane protein P.IIC (piiC).